The chain runs to 336 residues: Holliday junction branch migration complex subunit RuvB (336 aa).

The large ATPase domain (RuvB-L) stretch occupies residues 4–184 (ADRLVSADSS…FGIVQRLEFY (181 aa)). ATP-binding positions include Ile23, Arg24, Gly65, Lys68, Thr69, Thr70, 131–133 (EDY), Arg174, Tyr184, and Arg221. Thr69 is a Mg(2+) binding site. The tract at residues 185 to 255 (QIPDLQHIVS…IAAQALDMLN (71 aa)) is small ATPAse domain (RuvB-S). Residues 258–336 (AEGFDYMDRK…HFGITPPEMP (79 aa)) are head domain (RuvB-H). Residues Arg294, Arg313, and Arg318 each contribute to the DNA site.

It belongs to the RuvB family. As to quaternary structure, homohexamer. Forms an RuvA(8)-RuvB(12)-Holliday junction (HJ) complex. HJ DNA is sandwiched between 2 RuvA tetramers; dsDNA enters through RuvA and exits via RuvB. An RuvB hexamer assembles on each DNA strand where it exits the tetramer. Each RuvB hexamer is contacted by two RuvA subunits (via domain III) on 2 adjacent RuvB subunits; this complex drives branch migration. In the full resolvosome a probable DNA-RuvA(4)-RuvB(12)-RuvC(2) complex forms which resolves the HJ.

The protein resides in the cytoplasm. The enzyme catalyses ATP + H2O = ADP + phosphate + H(+). Functionally, the RuvA-RuvB-RuvC complex processes Holliday junction (HJ) DNA during genetic recombination and DNA repair, while the RuvA-RuvB complex plays an important role in the rescue of blocked DNA replication forks via replication fork reversal (RFR). RuvA specifically binds to HJ cruciform DNA, conferring on it an open structure. The RuvB hexamer acts as an ATP-dependent pump, pulling dsDNA into and through the RuvAB complex. RuvB forms 2 homohexamers on either side of HJ DNA bound by 1 or 2 RuvA tetramers; 4 subunits per hexamer contact DNA at a time. Coordinated motions by a converter formed by DNA-disengaged RuvB subunits stimulates ATP hydrolysis and nucleotide exchange. Immobilization of the converter enables RuvB to convert the ATP-contained energy into a lever motion, pulling 2 nucleotides of DNA out of the RuvA tetramer per ATP hydrolyzed, thus driving DNA branch migration. The RuvB motors rotate together with the DNA substrate, which together with the progressing nucleotide cycle form the mechanistic basis for DNA recombination by continuous HJ branch migration. Branch migration allows RuvC to scan DNA until it finds its consensus sequence, where it cleaves and resolves cruciform DNA. The polypeptide is Holliday junction branch migration complex subunit RuvB (Klebsiella pneumoniae subsp. pneumoniae (strain ATCC 700721 / MGH 78578)).